The following is a 412-amino-acid chain: Odorant receptor 47b (412 aa).

Residues 1–74 are Cytoplasmic-facing; it reads MNDSGYQSNL…NLFIMCNVMT (74 aa). The chain crosses the membrane as a helical span at residues 75 to 95; it reads IFWTMFVALPESKNVIEMGDD. Residues 96–103 are Extracellular-facing; it reads LVWISGMA. A helical transmembrane segment spans residues 104–124; it reads LVFTKIFYMHLRCDEIDELIS. Over 125–169 the chain is Cytoplasmic; the sequence is DFEYYNRELRPHNIDEEVLGWQRLCYVIESGLYINCFCLVNFFSA. Residues 170–190 traverse the membrane as a helical segment; that stretch reads AIFLQPLLGEGKLPFHSVYPF. Residues 191–229 are Extracellular-facing; the sequence is QWHRLDLHPYTFWFLYIWQSLTSQHNLMSILMVDMVGIS. Residues 230-250 traverse the membrane as a helical segment; sequence TFLQTALNLKLLCIEIRKLGD. Topologically, residues 251 to 302 are cytoplasmic; it reads MEVSDKRFHEEFCRVVRFHQHIIKLVGKANRAFNGAFNAQLMASFSLISIST. The chain crosses the membrane as a helical span at residues 303 to 323; sequence FETMAAAAVDPKMAAKFVLLM. Residues 324–330 are Extracellular-facing; that stretch reads LVAFIQL. The helical transmembrane segment at 331-351 threads the bilayer; it reads SLWCVSGTLVYTQSVEVAQAA. The Cytoplasmic segment spans residues 352 to 389; sequence FDINDWHTKSPGIQRDISFVILRAQKPLMYVAEPFLPF. A helical membrane pass occupies residues 390–410; that stretch reads TLGTYMLVLKNCYRLLALMQE. The Extracellular portion of the chain corresponds to 411–412; the sequence is SM.

Belongs to the insect chemoreceptor superfamily. Heteromeric odorant receptor channel (TC 1.A.69) family. Or49a subfamily. In terms of assembly, interacts with Orco. Complexes exist early in the endomembrane system in olfactory sensory neurons (OSNs), coupling these complexes to the conserved ciliary trafficking pathway. As to expression, expressed in olfactory sensory neurons in the antenna.

Its subcellular location is the cell membrane. Odorant receptor which mediates acceptance or avoidance behavior, depending on its substrates. The odorant receptor repertoire encodes a large collection of odor stimuli that vary widely in identity, intensity, and duration. May form a complex with Orco to form odorant-sensing units, providing sensitive and prolonged odorant signaling and calcium permeability. Plays an important role in sociosexual interactions since its enhances courtship in a pheromone-dependent manner. This chain is Odorant receptor 47b (Or47b), found in Drosophila melanogaster (Fruit fly).